A 236-amino-acid polypeptide reads, in one-letter code: Large ribosomal subunit protein uL1 (236 aa).

It belongs to the universal ribosomal protein uL1 family. As to quaternary structure, part of the 50S ribosomal subunit.

In terms of biological role, binds directly to 23S rRNA. The L1 stalk is quite mobile in the ribosome, and is involved in E site tRNA release. Protein L1 is also a translational repressor protein, it controls the translation of the L11 operon by binding to its mRNA. This is Large ribosomal subunit protein uL1 from Protochlamydia amoebophila (strain UWE25).